The sequence spans 60 residues: Large ribosomal subunit protein bL32 (60 aa).

A compositionally biased stretch (basic residues) spans methionine 1–histidine 19. The interval methionine 1 to leucine 20 is disordered.

The protein belongs to the bacterial ribosomal protein bL32 family.

The chain is Large ribosomal subunit protein bL32 from Syntrophobacter fumaroxidans (strain DSM 10017 / MPOB).